The sequence spans 425 residues: Histone-binding protein RBBP7 (425 aa).

7 WD repeats span residues 47–122 (QWLP…KINH), 128–173 (RARY…LRLR), 181–217 (GLSWNSNLSGHLLSASDDHTVCLWDISAGPKEGKVVD), 228–269 (VVED…HSVD), 275–312 (VNCLSFNPYSEFILATGSADKTVALWDLRNLKLKLHSF), 318–369 (EIFQ…LFIH), and 376–403 (ISDFSWNPNEPWVICSVSEDNIMQIWQM).

This sequence belongs to the WD repeat RBAP46/RBAP48/MSI1 family. Binds directly to helix 1 of the histone fold of histone H4, a region that is not accessible when H4 is in chromatin.

It is found in the nucleus. Functionally, core histone-binding subunit that may target chromatin remodeling factors, histone acetyltransferases and histone deacetylases to their histone substrates in a manner that is regulated by nucleosomal DNA. Component of several complexes which regulate chromatin metabolism. The polypeptide is Histone-binding protein RBBP7 (rbbp7) (Xenopus tropicalis (Western clawed frog)).